Reading from the N-terminus, the 180-residue chain is Anaerobic nitrite reductase GLB0 (180 aa).

A Globin domain is found at 23–172; the sequence is TYSKENEQLV…LAEQVKAEMH (150 aa). The Homodimerization signature appears at 56–60; the sequence is EIAPG. Heme b-binding residues include Ser-66, Lys-80, His-84, Lys-114, Thr-118, and His-119. Positions 126–138 match the Homodimerization motif; that stretch reads DDQFEIVKEAILY.

This sequence belongs to the plant globin family. Homodimer. The cofactor is heme b.

It is found in the cytoplasm. The protein localises to the nucleus. The enzyme catalyses Fe(III)-heme b-[protein] + nitric oxide + H2O = Fe(II)-heme b-[protein] + nitrite + 2 H(+). Phytoglobin that reduces nitrite to nitric oxide (NO) under anoxic conditions (e.g. during flooding or in waterlogged soil). May not function as an oxygen storage or transport protein. Has an unusually high affinity for O(2) through an hexacoordinate heme iron because of a very low dissociation constant. This chain is Anaerobic nitrite reductase GLB0, found in Physcomitrium patens (Spreading-leaved earth moss).